The sequence spans 500 residues: Glycerol kinase (500 aa).

Threonine 16 lines the ADP pocket. Residues threonine 16 and threonine 17 each coordinate ATP. Threonine 16 is a binding site for sn-glycerol 3-phosphate. Arginine 20 contributes to the ADP binding site. The sn-glycerol 3-phosphate site is built by arginine 86, glutamate 87, tyrosine 138, and aspartate 247. The glycerol site is built by arginine 86, glutamate 87, tyrosine 138, aspartate 247, and glutamine 248. ADP is bound by residues threonine 269 and glycine 312. Residues threonine 269, glycine 312, glutamine 316, and glycine 413 each contribute to the ATP site. Residues glycine 413 and asparagine 417 each coordinate ADP.

Belongs to the FGGY kinase family.

It catalyses the reaction glycerol + ATP = sn-glycerol 3-phosphate + ADP + H(+). It participates in polyol metabolism; glycerol degradation via glycerol kinase pathway; sn-glycerol 3-phosphate from glycerol: step 1/1. With respect to regulation, inhibited by fructose 1,6-bisphosphate (FBP). Functionally, key enzyme in the regulation of glycerol uptake and metabolism. Catalyzes the phosphorylation of glycerol to yield sn-glycerol 3-phosphate. The polypeptide is Glycerol kinase (Rippkaea orientalis (strain PCC 8801 / RF-1) (Cyanothece sp. (strain PCC 8801))).